The primary structure comprises 614 residues: Zinc finger and SCAN domain-containing protein 2 (614 aa).

Disordered regions lie at residues Met-1 to Gln-25, Ala-42 to Gln-73, and Asn-162 to Pro-200. Residues Ala-69–Leu-127 form the SCAN box domain. 14 C2H2-type zinc fingers span residues Tyr-222–His-244, Tyr-250–His-272, Tyr-278–His-300, Phe-306–His-328, Tyr-334–His-356, Tyr-362–His-384, Tyr-390–His-412, Tyr-418–His-440, Tyr-446–His-468, Tyr-474–His-496, Tyr-502–His-524, Tyr-530–His-552, Tyr-558–His-580, and Tyr-586–His-608.

This sequence belongs to the krueppel C2H2-type zinc-finger protein family. As to expression, in the adult, predominantly found in spermatids. Also present in the embryo.

The protein resides in the nucleus. Its function is as follows. May be involved in transcriptional regulation during the post-meiotic stages of spermatogenesis. This is Zinc finger and SCAN domain-containing protein 2 (Zscan2) from Mus musculus (Mouse).